The chain runs to 260 residues: UPF0246 protein BceJ2315_22780 (260 aa).

Belongs to the UPF0246 family.

The chain is UPF0246 protein BceJ2315_22780 from Burkholderia cenocepacia (strain ATCC BAA-245 / DSM 16553 / LMG 16656 / NCTC 13227 / J2315 / CF5610) (Burkholderia cepacia (strain J2315)).